Here is a 186-residue protein sequence, read N- to C-terminus: UPF0200 protein PH1008 (186 aa).

Residue 7 to 14 (GMPGSGKG) participates in ATP binding.

This sequence belongs to the UPF0200 family.

This is UPF0200 protein PH1008 from Pyrococcus horikoshii (strain ATCC 700860 / DSM 12428 / JCM 9974 / NBRC 100139 / OT-3).